The chain runs to 128 residues: Large ribosomal subunit protein bL12 (128 aa).

This sequence belongs to the bacterial ribosomal protein bL12 family. In terms of assembly, homodimer. Part of the ribosomal stalk of the 50S ribosomal subunit. Forms a multimeric L10(L12)X complex, where L10 forms an elongated spine to which 2 to 4 L12 dimers bind in a sequential fashion. Binds GTP-bound translation factors.

Forms part of the ribosomal stalk which helps the ribosome interact with GTP-bound translation factors. Is thus essential for accurate translation. The protein is Large ribosomal subunit protein bL12 of Thermotoga petrophila (strain ATCC BAA-488 / DSM 13995 / JCM 10881 / RKU-1).